The primary structure comprises 1320 residues: Junctional cadherin 5-associated protein (1320 aa).

Disordered stretches follow at residues 1-124 (MYSV…GSGS), 183-202 (KKPR…KRPQ), 209-233 (YPFV…ALSP), 252-426 (GVPK…SIQY), 452-492 (DDTS…NEQS), 676-720 (ASSP…PTPT), 741-802 (NQKP…STTG), and 835-942 (ELQE…QKSQ). Polar residues-rich tracts occupy residues 58 to 71 (RTSL…NSEN) and 95 to 107 (NQPS…QPQS). Residues 108-119 (GRDDIYWSRGRQ) show a composition bias toward basic and acidic residues. Positions 255–267 (KVPPYPPSFPSPS) are enriched in pro residues. A compositionally biased stretch (basic and acidic residues) spans 308-329 (FQDHQHRDPRGSYPTRSKDPSH). Pro residues predominate over residues 338–356 (LEPPVYVPPPSYRSPPQHI). A compositionally biased stretch (polar residues) spans 369–378 (VSSNQSQQQV). The span at 404-415 (GSPPQGLPPQPY) shows a compositional bias: pro residues. The span at 454 to 465 (TSYNPGLLTTQE) shows a compositional bias: polar residues. T484 is modified (phosphothreonine). S486 carries the post-translational modification Phosphoserine. A compositionally biased stretch (polar residues) spans 741-782 (NQKPSVPHLQGQTSLSPSRNSAFSRTSSAINQASMSKGTSDQ). The span at 849 to 859 (EDSEAEQPEDC) shows a compositional bias: acidic residues. S851 carries the phosphoserine modification. Residues 865-877 (KSWALQGTRTAQQ) are compositionally biased toward polar residues. Phosphoserine occurs at positions 1027 and 1033. Disordered stretches follow at residues 1085–1116 (ARRT…SLAL) and 1153–1174 (SDVD…KDEE). A phosphoserine mark is found at S1245 and S1248. Residues 1275–1320 (DEAWQAGHLPSVSQNENGHPEVPRDKMSDQDLWCADSYDPSRVERV) are disordered. The span at 1292 to 1303 (GHPEVPRDKMSD) shows a compositional bias: basic and acidic residues.

The protein localises to the cell junction. It is found in the adherens junction. The sequence is that of Junctional cadherin 5-associated protein from Mus musculus (Mouse).